A 98-amino-acid polypeptide reads, in one-letter code: EKC/KEOPS complex subunit GON7 (98 aa).

Met-1 is subject to N-acetylmethionine. The disordered stretch occupies residues 55 to 98 (DAQGLAEDPDDALDGDDEDDAEDENNSGRTNSDGPSAKRPKPAS). The span at 61 to 79 (EDPDDALDGDDEDDAEDEN) shows a compositional bias: acidic residues.

As to quaternary structure, component of the EKC/KEOPS complex composed of at least GON7, TP53RK, TPRKB, OSGEP and LAGE3; the whole complex dimerizes.

The protein localises to the nucleus. Functionally, component of the EKC/KEOPS complex that is required for the formation of a threonylcarbamoyl group on adenosine at position 37 (t(6)A37) in tRNAs that read codons beginning with adenine. The complex is probably involved in the transfer of the threonylcarbamoyl moiety of threonylcarbamoyl-AMP (TC-AMP) to the N6 group of A37. GON7 plays a supporting role to the catalytic subunit OSGEP in the complex. The chain is EKC/KEOPS complex subunit GON7 from Mus musculus (Mouse).